The sequence spans 568 residues: Acetate--CoA ligase CCL3 (568 aa).

ATP contacts are provided by residues 204–212 (TSGTTASPK), 340–345 (HTYGLS), Asp437, 449–452 (IKDR), and Lys547. The segment at 272–340 (TAKGVYSAIA…MSEKGFKVAH (69 aa)) is SBD1. Positions 341–417 (TYGLSETYGP…MRGNAVMKGY (77 aa)) are SBD2.

This sequence belongs to the ATP-dependent AMP-binding enzyme family. Mostly expressed in glandular trichomes (lupulin glands) after flowering and in old leaves, and, to a lower extent, in stems, young leaves, cones and flowers.

It is found in the cytoplasm. The protein localises to the cytosol. The enzyme catalyses acetate + ATP + CoA = acetyl-CoA + AMP + diphosphate. It carries out the reaction propanoate + ATP + CoA = propanoyl-CoA + AMP + diphosphate. The catalysed reaction is butanoate + ATP + CoA = butanoyl-CoA + AMP + diphosphate. It catalyses the reaction 3-methylbutanoate + ATP + CoA = 3-methylbutanoyl-CoA + AMP + diphosphate. The enzyme catalyses pentanoate + ATP + CoA = pentanoyl-CoA + AMP + diphosphate. It carries out the reaction hexanoate + ATP + CoA = hexanoyl-CoA + AMP + diphosphate. The catalysed reaction is 2-methylpropanoate + ATP + CoA = 2-methylpropanoyl-CoA + AMP + diphosphate. It catalyses the reaction 2-methylbutanoate + ATP + CoA = 2-methylbutanoyl-CoA + AMP + diphosphate. The enzyme catalyses 2-methylpentanoate + ATP + CoA = 2-methylpentanoyl-CoA + AMP + diphosphate. It carries out the reaction 3-methylpentanoate + ATP + CoA = 3-methylpentanoyl-CoA + AMP + diphosphate. The catalysed reaction is 4-methylpentanoate + ATP + CoA = 4-methylpentanoyl-CoA + AMP + diphosphate. Its pathway is secondary metabolite biosynthesis. Involved in the biosynthesis of prenylated phenolics natural products which contribute to the bitter taste of beer and display broad biological activities. Catalyzes the ligation of CoA on propanoate to produce propanoyl-CoA. Can also use 2-methylpropanoate (isobutyric acid), acetate, butanoate, isovalerate, pentanoate, hexanoate, 2-methylbutanoate, 2-methylpentanoate, 3-methylpentanoate and 4-methylpentanoate as substrates with a lower efficiency. Triggers the formation of very short chain acyl-CoAs from the corresponding fatty acids, including acetic acid, propanoic acid, butyric acid and its isomer. The polypeptide is Acetate--CoA ligase CCL3 (Humulus lupulus (European hop)).